The following is a 540-amino-acid chain: Hydroxylamine reductase (540 aa).

Residues C3, C6, C15, and C21 each contribute to the [4Fe-4S] cluster site. H236, E260, C304, C395, C423, C448, E483, and K485 together coordinate hybrid [4Fe-2O-2S] cluster. At C395 the chain carries Cysteine persulfide.

Belongs to the HCP family. [4Fe-4S] cluster serves as cofactor. It depends on hybrid [4Fe-2O-2S] cluster as a cofactor.

The protein resides in the cytoplasm. It carries out the reaction A + NH4(+) + H2O = hydroxylamine + AH2 + H(+). Catalyzes the reduction of hydroxylamine to form NH(3) and H(2)O. This is Hydroxylamine reductase from Methanosarcina mazei (strain ATCC BAA-159 / DSM 3647 / Goe1 / Go1 / JCM 11833 / OCM 88) (Methanosarcina frisia).